The chain runs to 372 residues: tRNA pseudouridine synthase D (372 aa).

Aspartate 85 serves as the catalytic Nucleophile. The region spanning 160–330 is the TRUD domain; it reads GFANYFGYQR…MQGSRRFMWG (171 aa).

Belongs to the pseudouridine synthase TruD family.

The catalysed reaction is uridine(13) in tRNA = pseudouridine(13) in tRNA. In terms of biological role, responsible for synthesis of pseudouridine from uracil-13 in transfer RNAs. In Campylobacter jejuni subsp. jejuni serotype O:6 (strain 81116 / NCTC 11828), this protein is tRNA pseudouridine synthase D.